Here is a 404-residue protein sequence, read N- to C-terminus: Phosphoglycerate kinase (404 aa).

Substrate is bound by residues 22-24 (DFN), Arg37, 60-63 (HLGR), Arg120, and Arg160. ATP is bound by residues Lys215, Glu333, and 360–363 (GGDS).

The protein belongs to the phosphoglycerate kinase family. In terms of assembly, monomer.

The protein resides in the cytoplasm. It carries out the reaction (2R)-3-phosphoglycerate + ATP = (2R)-3-phospho-glyceroyl phosphate + ADP. Its pathway is carbohydrate degradation; glycolysis; pyruvate from D-glyceraldehyde 3-phosphate: step 2/5. This chain is Phosphoglycerate kinase, found in Latilactobacillus sakei subsp. sakei (strain 23K) (Lactobacillus sakei subsp. sakei).